The chain runs to 281 residues: NAD kinase (281 aa).

Asp61 serves as the catalytic Proton acceptor. Residues 61–62, 134–135, Arg145, Asp164, 175–180, and Gln234 each bind NAD(+); these read DG, ND, and TAYSLS.

The protein belongs to the NAD kinase family. The cofactor is a divalent metal cation.

The protein resides in the cytoplasm. It catalyses the reaction NAD(+) + ATP = ADP + NADP(+) + H(+). Functionally, involved in the regulation of the intracellular balance of NAD and NADP, and is a key enzyme in the biosynthesis of NADP. Catalyzes specifically the phosphorylation on 2'-hydroxyl of the adenosine moiety of NAD to yield NADP. The polypeptide is NAD kinase (Clostridium botulinum (strain ATCC 19397 / Type A)).